The following is a 240-amino-acid chain: Ubiquinone biosynthesis O-methyltransferase (240 aa).

S-adenosyl-L-methionine-binding residues include R44, G64, D85, and M129.

This sequence belongs to the methyltransferase superfamily. UbiG/COQ3 family.

It carries out the reaction a 3-demethylubiquinol + S-adenosyl-L-methionine = a ubiquinol + S-adenosyl-L-homocysteine + H(+). It catalyses the reaction a 3-(all-trans-polyprenyl)benzene-1,2-diol + S-adenosyl-L-methionine = a 2-methoxy-6-(all-trans-polyprenyl)phenol + S-adenosyl-L-homocysteine + H(+). It participates in cofactor biosynthesis; ubiquinone biosynthesis. Functionally, O-methyltransferase that catalyzes the 2 O-methylation steps in the ubiquinone biosynthetic pathway. In Shigella flexneri serotype 5b (strain 8401), this protein is Ubiquinone biosynthesis O-methyltransferase.